The following is a 366-amino-acid chain: 1-deoxy-D-xylulose 5-phosphate reductoisomerase (366 aa).

7 residues coordinate NADPH: threonine 7, glycine 8, serine 9, isoleucine 10, glycine 31, asparagine 33, and asparagine 111. Lysine 112 contacts 1-deoxy-D-xylulose 5-phosphate. Glutamate 113 lines the NADPH pocket. Aspartate 131 provides a ligand contact to Mn(2+). 4 residues coordinate 1-deoxy-D-xylulose 5-phosphate: serine 132, glutamate 133, serine 162, and histidine 185. Residue glutamate 133 coordinates Mn(2+). Glycine 191 is a binding site for NADPH. 1-deoxy-D-xylulose 5-phosphate-binding residues include serine 198, asparagine 203, lysine 204, and glutamate 207. Glutamate 207 contacts Mn(2+).

Belongs to the DXR family. It depends on Mg(2+) as a cofactor. Mn(2+) is required as a cofactor.

The enzyme catalyses 2-C-methyl-D-erythritol 4-phosphate + NADP(+) = 1-deoxy-D-xylulose 5-phosphate + NADPH + H(+). Its pathway is isoprenoid biosynthesis; isopentenyl diphosphate biosynthesis via DXP pathway; isopentenyl diphosphate from 1-deoxy-D-xylulose 5-phosphate: step 1/6. In terms of biological role, catalyzes the NADPH-dependent rearrangement and reduction of 1-deoxy-D-xylulose-5-phosphate (DXP) to 2-C-methyl-D-erythritol 4-phosphate (MEP). The protein is 1-deoxy-D-xylulose 5-phosphate reductoisomerase of Nautilia profundicola (strain ATCC BAA-1463 / DSM 18972 / AmH).